A 436-amino-acid polypeptide reads, in one-letter code: UDP-N-acetylglucosamine 1-carboxyvinyltransferase 1 (436 aa).

22 to 23 (KN) is a binding site for phosphoenolpyruvate. Position 93 (arginine 93) interacts with UDP-N-acetyl-alpha-D-glucosamine. Cysteine 117 functions as the Proton donor in the catalytic mechanism. A 2-(S-cysteinyl)pyruvic acid O-phosphothioketal modification is found at cysteine 117. UDP-N-acetyl-alpha-D-glucosamine is bound by residues 122-126 (RPIDQ), aspartate 306, and valine 328.

Belongs to the EPSP synthase family. MurA subfamily.

It localises to the cytoplasm. It carries out the reaction phosphoenolpyruvate + UDP-N-acetyl-alpha-D-glucosamine = UDP-N-acetyl-3-O-(1-carboxyvinyl)-alpha-D-glucosamine + phosphate. The protein operates within cell wall biogenesis; peptidoglycan biosynthesis. In terms of biological role, cell wall formation. Adds enolpyruvyl to UDP-N-acetylglucosamine. The sequence is that of UDP-N-acetylglucosamine 1-carboxyvinyltransferase 1 from Bacillus licheniformis (strain ATCC 14580 / DSM 13 / JCM 2505 / CCUG 7422 / NBRC 12200 / NCIMB 9375 / NCTC 10341 / NRRL NRS-1264 / Gibson 46).